Consider the following 807-residue polypeptide: Glycerol-3-phosphate acyltransferase (807 aa).

An HXXXXD motif motif is present at residues 305–310; that stretch reads CHRSHM.

It belongs to the GPAT/DAPAT family.

It localises to the cell inner membrane. The catalysed reaction is sn-glycerol 3-phosphate + an acyl-CoA = a 1-acyl-sn-glycero-3-phosphate + CoA. It functions in the pathway phospholipid metabolism; CDP-diacylglycerol biosynthesis; CDP-diacylglycerol from sn-glycerol 3-phosphate: step 1/3. In Klebsiella pneumoniae subsp. pneumoniae (strain ATCC 700721 / MGH 78578), this protein is Glycerol-3-phosphate acyltransferase.